Reading from the N-terminus, the 141-residue chain is Nucleoside diphosphate kinase (141 aa).

ATP-binding residues include lysine 11, phenylalanine 59, arginine 87, threonine 93, arginine 104, and asparagine 114. The active-site Pros-phosphohistidine intermediate is histidine 117.

This sequence belongs to the NDK family. As to quaternary structure, homotetramer. The cofactor is Mg(2+).

Its subcellular location is the cytoplasm. It catalyses the reaction a 2'-deoxyribonucleoside 5'-diphosphate + ATP = a 2'-deoxyribonucleoside 5'-triphosphate + ADP. It carries out the reaction a ribonucleoside 5'-diphosphate + ATP = a ribonucleoside 5'-triphosphate + ADP. Major role in the synthesis of nucleoside triphosphates other than ATP. The ATP gamma phosphate is transferred to the NDP beta phosphate via a ping-pong mechanism, using a phosphorylated active-site intermediate. In Cupriavidus metallidurans (strain ATCC 43123 / DSM 2839 / NBRC 102507 / CH34) (Ralstonia metallidurans), this protein is Nucleoside diphosphate kinase.